A 140-amino-acid polypeptide reads, in one-letter code: Putative transmembrane protein 49 (140 aa).

2 helical membrane-spanning segments follow: residues 23-43 (LIMS…IGGV) and 93-110 (IAVH…RYMY).

It localises to the host membrane. The protein is Putative transmembrane protein 49 (SIFV0049) of Saccharolobus islandicus (Sulfolobus islandicus).